Consider the following 653-residue polypeptide: MSSRAHPVDGSPATDGGHVPMKPSPTRHKVGIPPKQNMFKDFMYTFKETFFHDDPLRDFKDQPKSKQFMLGLQSVFPVFDWGRNYTFKKFRGDLISGLTIASLCIPQDIGYAKLANLDPKYGLYSSFVPPLVYACMGSSRDIAIGPVAVVSLLLGTLLRAEIDPNTSPDEYLRLAFTATFFAGITEAALGFFRLGFLIDFLSHAAVVGFMGGAAITIALQQLKGFLGIKKFTKKTDIISVLESVFKAAHHGWNWQTILIGASFLTFLLTSKIIGKKSKKLFWVPAIAPLISVIVSTFFVYITRADKQGVQIVKHLDQGINPSSFHLIYFTGDNLAKGIRIGVVAGMVALTEAVAIGRTFAAMKDYQIDGNKEMVALGMMNVVGSMSSCYVATGSFSRSAVNFMAGCQTAVSNIIMSIVVLLTLLFLTPLFKYTPNAILAAIIINAVIPLIDIQAAILIFKVDKLDFIACIGAFFGVIFVSVEIGLLIAVSISFAKILLQVTRPRTAVLGNIPRTSVYRNIQQYPEATMVPGVLTIRVDSAIYFSNSNYVRERIQRWLHEEEEKVKAASLPRIQFLIIEMSPVTDIDTSGIHALEDLYKSLQKRDIQLILANPGPLVIGKLHLSHFADMLGQDNIYLTVADAVEACCPKLSNEV.

The interval 1–30 (MSSRAHPVDGSPATDGGHVPMKPSPTRHKV) is disordered. Over 1-91 (MSSRAHPVDG…GRNYTFKKFR (91 aa)) the chain is Cytoplasmic. Residues 92-112 (GDLISGLTIASLCIPQDIGYA) form a helical membrane-spanning segment. Residues 113–116 (KLAN) are Extracellular-facing. The chain crosses the membrane as a helical span at residues 117–137 (LDPKYGLYSSFVPPLVYACMG). The Cytoplasmic segment spans residues 138–141 (SSRD). Residues 142-162 (IAIGPVAVVSLLLGTLLRAEI) form a helical membrane-spanning segment. The Extracellular segment spans residues 163–173 (DPNTSPDEYLR). 2 consecutive transmembrane segments (helical) span residues 174–194 (LAFT…FFRL) and 195–215 (GFLI…GAAI). The Extracellular portion of the chain corresponds to 216–253 (TIALQQLKGFLGIKKFTKKTDIISVLESVFKAAHHGWN). Residues 254–274 (WQTILIGASFLTFLLTSKIIG) form a helical membrane-spanning segment. The Cytoplasmic segment spans residues 275-280 (KKSKKL). A helical transmembrane segment spans residues 281 to 301 (FWVPAIAPLISVIVSTFFVYI). Residues 302–339 (TRADKQGVQIVKHLDQGINPSSFHLIYFTGDNLAKGIR) are Extracellular-facing. A helical membrane pass occupies residues 340–360 (IGVVAGMVALTEAVAIGRTFA). Over 361–372 (AMKDYQIDGNKE) the chain is Cytoplasmic. The chain crosses the membrane as a helical span at residues 373 to 393 (MVALGMMNVVGSMSSCYVATG). Residues 394–409 (SFSRSAVNFMAGCQTA) lie on the Extracellular side of the membrane. The chain crosses the membrane as a helical span at residues 410–430 (VSNIIMSIVVLLTLLFLTPLF). At 431-438 (KYTPNAIL) the chain is on the cytoplasmic side. The chain crosses the membrane as a helical span at residues 439–459 (AAIIINAVIPLIDIQAAILIF). Residues 460-466 (KVDKLDF) are Extracellular-facing. A helical membrane pass occupies residues 467 to 487 (IACIGAFFGVIFVSVEIGLLI). Residues 488–653 (AVSISFAKIL…ACCPKLSNEV (166 aa)) lie on the Cytoplasmic side of the membrane. The STAS domain maps to 522-645 (QYPEATMVPG…LTVADAVEAC (124 aa)).

The protein belongs to the SLC26A/SulP transporter (TC 2.A.53.1) family. In terms of assembly, homodimer. Interacts with OASA1 through its STAS domain. In terms of tissue distribution, expressed in lateral root cap, root hairs, epidermal and cortical cells of roots.

It localises to the cell membrane. Interaction with OASA1 negatively impacts the transporter activity. In terms of biological role, high-affinity H(+)/sulfate cotransporter that mediates the uptake of the environmental sulfate by plant roots. Plays a central role in the regulation of sulfate assimilation. Unable to transport molybdate. The polypeptide is Sulfate transporter 1.2 (SULTR1;2) (Arabidopsis thaliana (Mouse-ear cress)).